A 131-amino-acid polypeptide reads, in one-letter code: Type IV wide pilus major component PilA4 (131 aa).

Residues 1–6 (MRNAKG) constitute a propeptide, leader sequence. Phe7 carries the post-translational modification N-methylphenylalanine. A helical membrane pass occupies residues 7-27 (FTLIELLIVIAIIAILAAVLI). Cys95 and Cys130 are disulfide-bonded.

Interacts with PilQ. In terms of processing, found in three forms of 14-kDa, 18-kDa and a glycosylated 23-kDa form. Both narrow and wide pili are glycosylated.

Its subcellular location is the cell inner membrane. It localises to the cell outer membrane. It is found in the periplasm. Its function is as follows. Plays an essential role in the assembly of two types of T4P pili: a wide and a narrow that participate in natural transformation and twitching motility. Major component of the wide pilus that is essential for natural transformation working as a DNA translocator structure that spans the inner and outer membranes. In addition, participates in the assembly of the narrow pilus composed of the PilA5 subunit that is required for twitching motility. This Thermus thermophilus (strain ATCC BAA-163 / DSM 7039 / HB27) protein is Type IV wide pilus major component PilA4 (pilA4).